A 913-amino-acid chain; its full sequence is Eukaryotic translation initiation factor 3 subunit C (913 aa).

The interval M1–F31 is disordered. Residues S11–V20 show a composition bias toward acidic residues. A compositionally biased stretch (polar residues) spans Q21–F31. Phosphoserine occurs at positions 34, 165, 177, and 186. Disordered regions lie at residues F157–G195 and P208–E285. Residues D162–E171 are compositionally biased toward acidic residues. Residues G172–A184 are compositionally biased toward basic and acidic residues. Residues D214–N239 are compositionally biased toward acidic residues. Basic and acidic residues predominate over residues M244 to R263. Positions K264–K276 are enriched in basic residues. Positions F645–P821 constitute a PCI domain. The interval R856–E913 is disordered. Residues Q887–Q898 are compositionally biased toward basic residues.

It belongs to the eIF-3 subunit C family. In terms of assembly, component of the eukaryotic translation initiation factor 3 (eIF-3) complex. The eIF-3 complex interacts with pix.

The protein resides in the cytoplasm. Functionally, component of the eukaryotic translation initiation factor 3 (eIF-3) complex, which is involved in protein synthesis of a specialized repertoire of mRNAs and, together with other initiation factors, stimulates binding of mRNA and methionyl-tRNAi to the 40S ribosome. The eIF-3 complex specifically targets and initiates translation of a subset of mRNAs involved in cell proliferation. This chain is Eukaryotic translation initiation factor 3 subunit C, found in Drosophila virilis (Fruit fly).